Here is a 393-residue protein sequence, read N- to C-terminus: Arrestin-C (393 aa).

Basic and acidic residues predominate over residues 371–386; it reads FARQEDGGEEKQKALA. The interval 371-393 is disordered; the sequence is FARQEDGGEEKQKALAEEGDEGS.

This sequence belongs to the arrestin family. Homodimer; disulfide-linked in response to retinal illumination. Interacts with CXCR4; the interaction is dependent on the C-terminal phosphorylation of CXCR4 and modulates the calcium ion mobilization activity of CXCR4.

It localises to the photoreceptor inner segment. Its subcellular location is the cell projection. It is found in the cilium. The protein resides in the photoreceptor outer segment. May play a role in an as yet undefined retina-specific signal transduction. Could bind to photoactivated-phosphorylated red/green opsins. The chain is Arrestin-C (ARR3) from Ictidomys tridecemlineatus (Thirteen-lined ground squirrel).